Here is a 95-residue protein sequence, read N- to C-terminus: Aspartyl/glutamyl-tRNA(Asn/Gln) amidotransferase subunit C (95 aa).

It belongs to the GatC family. In terms of assembly, heterotrimer of A, B and C subunits.

The catalysed reaction is L-glutamyl-tRNA(Gln) + L-glutamine + ATP + H2O = L-glutaminyl-tRNA(Gln) + L-glutamate + ADP + phosphate + H(+). It catalyses the reaction L-aspartyl-tRNA(Asn) + L-glutamine + ATP + H2O = L-asparaginyl-tRNA(Asn) + L-glutamate + ADP + phosphate + 2 H(+). Its function is as follows. Allows the formation of correctly charged Asn-tRNA(Asn) or Gln-tRNA(Gln) through the transamidation of misacylated Asp-tRNA(Asn) or Glu-tRNA(Gln) in organisms which lack either or both of asparaginyl-tRNA or glutaminyl-tRNA synthetases. The reaction takes place in the presence of glutamine and ATP through an activated phospho-Asp-tRNA(Asn) or phospho-Glu-tRNA(Gln). The chain is Aspartyl/glutamyl-tRNA(Asn/Gln) amidotransferase subunit C from Geobacter metallireducens (strain ATCC 53774 / DSM 7210 / GS-15).